The sequence spans 63 residues: Kappa-theraphotoxin-Cg3a 1 (63 aa).

The N-terminal stretch at 1–21 (MKNTSILFILGLALLLVLAFE) is a signal peptide. Residues 22–29 (VQVGESDG) constitute a propeptide that is removed on maturation. 3 disulfide bridges follow: Cys-31–Cys-46, Cys-38–Cys-51, and Cys-45–Cys-58.

This sequence belongs to the neurotoxin 10 (Hwtx-1) family. 44 (Jztx-4) subfamily. In terms of tissue distribution, expressed by the venom gland.

It is found in the secreted. Functionally, gating modifier of Kv2.1/KCNB1, Kv2.2/KCNB2 and Kv4.3/KCND3 channels. This is Kappa-theraphotoxin-Cg3a 1 from Chilobrachys guangxiensis (Chinese earth tiger tarantula).